A 93-amino-acid chain; its full sequence is Neutrophil cationic peptide 1 type A (93 aa).

Residues 1–19 (MRTVPLFAACLLLTLMAQA) form the signal peptide. A propeptide spanning residues 20 to 62 (EPLPRAADHSDTKMKGDREDHVAVISFWEEESTSLEDAGAGAG) is cleaved from the precursor. Intrachain disulfides connect Cys-65–Cys-93, Cys-67–Cys-82, and Cys-72–Cys-92.

It belongs to the alpha-defensin family.

It is found in the secreted. Functionally, has antibiotic, anti-fungi and antiviral activity. The protein is Neutrophil cationic peptide 1 type A of Cavia porcellus (Guinea pig).